The primary structure comprises 316 residues: N-acetylmuramic acid 6-phosphate etherase (316 aa).

Residues 68–231 (ITDRLRSGGR…STCAMVRLGK (164 aa)) form the SIS domain. Residue Glu96 is the Proton donor of the active site. The active site involves Glu127.

The protein belongs to the GCKR-like family. MurNAc-6-P etherase subfamily. As to quaternary structure, homodimer.

It carries out the reaction N-acetyl-D-muramate 6-phosphate + H2O = N-acetyl-D-glucosamine 6-phosphate + (R)-lactate. The protein operates within amino-sugar metabolism; N-acetylmuramate degradation. Specifically catalyzes the cleavage of the D-lactyl ether substituent of MurNAc 6-phosphate, producing GlcNAc 6-phosphate and D-lactate. This is N-acetylmuramic acid 6-phosphate etherase from Prochlorococcus marinus (strain MIT 9313).